Here is a 427-residue protein sequence, read N- to C-terminus: 3-phosphoshikimate 1-carboxyvinyltransferase (427 aa).

Residues K20, S21, and R25 each coordinate 3-phosphoshikimate. K20 contacts phosphoenolpyruvate. Residues G92 and R120 each coordinate phosphoenolpyruvate. 3-phosphoshikimate contacts are provided by S165, Q167, D313, and K340. Q167 contributes to the phosphoenolpyruvate binding site. Residue D313 is the Proton acceptor of the active site. Phosphoenolpyruvate is bound by residues R344 and R388.

Belongs to the EPSP synthase family. Monomer.

It is found in the cytoplasm. It carries out the reaction 3-phosphoshikimate + phosphoenolpyruvate = 5-O-(1-carboxyvinyl)-3-phosphoshikimate + phosphate. It functions in the pathway metabolic intermediate biosynthesis; chorismate biosynthesis; chorismate from D-erythrose 4-phosphate and phosphoenolpyruvate: step 6/7. Functionally, catalyzes the transfer of the enolpyruvyl moiety of phosphoenolpyruvate (PEP) to the 5-hydroxyl of shikimate-3-phosphate (S3P) to produce enolpyruvyl shikimate-3-phosphate and inorganic phosphate. The chain is 3-phosphoshikimate 1-carboxyvinyltransferase from Geobacillus kaustophilus (strain HTA426).